The sequence spans 88 residues: Small ribosomal subunit protein uS15 (88 aa).

The protein belongs to the universal ribosomal protein uS15 family. In terms of assembly, part of the 30S ribosomal subunit. Forms a bridge to the 50S subunit in the 70S ribosome, contacting the 23S rRNA.

In terms of biological role, one of the primary rRNA binding proteins, it binds directly to 16S rRNA where it helps nucleate assembly of the platform of the 30S subunit by binding and bridging several RNA helices of the 16S rRNA. Forms an intersubunit bridge (bridge B4) with the 23S rRNA of the 50S subunit in the ribosome. The polypeptide is Small ribosomal subunit protein uS15 (Halothermothrix orenii (strain H 168 / OCM 544 / DSM 9562)).